A 390-amino-acid chain; its full sequence is MKATGIVVEYNPFHNGHKLHLNKARELTQADVVIAVMSGSFVQRGEPAIIPKWERAKMALSAGVDMVVELPVSFATQHATIFAEEAVRILDAIHIDTLFFGSEHGVAEDFTFAAKKVVENEARFDEAIQLALVDKKTSYARAYTEAFKKLFGQNLLDITKPNNILGFHYALAVQKQNPSISLQTIPREHAGYHDEEASHDQIASATAIRKLILAGKLEEASHYLPASSIDILRNYEGPFLSWTDYWSFLQYRLIQASTEELEGIRGVSEGIQNRMQQAATKAQNFSDFIELTKTKRYSNARLQRTALQILLNAKSKASSPYIRILGMNKTGQKYLSLHKKNISLPIVTTVSKAPPGLLEEELRATNIYTLVKKLENYQAGDFHIPPILTL.

ATP contacts are provided by residues 7-20 (VVEYNPFHNGHKLH), Gly101, Asn162, and Arg187.

It belongs to the TmcAL family.

The protein localises to the cytoplasm. The catalysed reaction is cytidine(34) in elongator tRNA(Met) + acetate + ATP = N(4)-acetylcytidine(34) in elongator tRNA(Met) + AMP + diphosphate. In terms of biological role, catalyzes the formation of N(4)-acetylcytidine (ac(4)C) at the wobble position of elongator tRNA(Met), using acetate and ATP as substrates. First activates an acetate ion to form acetyladenylate (Ac-AMP) and then transfers the acetyl group to tRNA to form ac(4)C34. In Listeria monocytogenes serovar 1/2a (strain ATCC BAA-679 / EGD-e), this protein is tRNA(Met) cytidine acetate ligase.